We begin with the raw amino-acid sequence, 430 residues long: Glutamate-1-semialdehyde 2,1-aminomutase (430 aa).

K267 carries the N6-(pyridoxal phosphate)lysine modification.

This sequence belongs to the class-III pyridoxal-phosphate-dependent aminotransferase family. HemL subfamily. In terms of assembly, homodimer. The cofactor is pyridoxal 5'-phosphate.

The protein resides in the cytoplasm. It catalyses the reaction (S)-4-amino-5-oxopentanoate = 5-aminolevulinate. It functions in the pathway porphyrin-containing compound metabolism; protoporphyrin-IX biosynthesis; 5-aminolevulinate from L-glutamyl-tRNA(Glu): step 2/2. The chain is Glutamate-1-semialdehyde 2,1-aminomutase from Cytophaga hutchinsonii (strain ATCC 33406 / DSM 1761 / CIP 103989 / NBRC 15051 / NCIMB 9469 / D465).